Reading from the N-terminus, the 396-residue chain is Small ribosomal subunit protein uS9m (396 aa).

The disordered stretch occupies residues 374-396 (PRVRERKKPGQEGARRKFTWKKR).

This sequence belongs to the universal ribosomal protein uS9 family. As to quaternary structure, component of the mitochondrial ribosome small subunit (28S) which comprises a 12S rRNA and about 30 distinct proteins.

It localises to the mitochondrion. This Bos taurus (Bovine) protein is Small ribosomal subunit protein uS9m (MRPS9).